The primary structure comprises 156 residues: ATP synthase subunit b (156 aa).

A helical transmembrane segment spans residues Ala-11–Ala-31.

This sequence belongs to the ATPase B chain family. In terms of assembly, F-type ATPases have 2 components, F(1) - the catalytic core - and F(0) - the membrane proton channel. F(1) has five subunits: alpha(3), beta(3), gamma(1), delta(1), epsilon(1). F(0) has three main subunits: a(1), b(2) and c(10-14). The alpha and beta chains form an alternating ring which encloses part of the gamma chain. F(1) is attached to F(0) by a central stalk formed by the gamma and epsilon chains, while a peripheral stalk is formed by the delta and b chains.

Its subcellular location is the cell inner membrane. Its function is as follows. F(1)F(0) ATP synthase produces ATP from ADP in the presence of a proton or sodium gradient. F-type ATPases consist of two structural domains, F(1) containing the extramembraneous catalytic core and F(0) containing the membrane proton channel, linked together by a central stalk and a peripheral stalk. During catalysis, ATP synthesis in the catalytic domain of F(1) is coupled via a rotary mechanism of the central stalk subunits to proton translocation. Functionally, component of the F(0) channel, it forms part of the peripheral stalk, linking F(1) to F(0). The sequence is that of ATP synthase subunit b from Psychromonas ingrahamii (strain DSM 17664 / CCUG 51855 / 37).